Reading from the N-terminus, the 311-residue chain is tRNA dimethylallyltransferase (311 aa).

Gly16–Ser23 lines the ATP pocket. Thr18 to Ser23 lines the substrate pocket. Interaction with substrate tRNA regions lie at residues Asp41–Gln44 and Gln165–Arg169.

It belongs to the IPP transferase family. As to quaternary structure, monomer. The cofactor is Mg(2+).

It carries out the reaction adenosine(37) in tRNA + dimethylallyl diphosphate = N(6)-dimethylallyladenosine(37) in tRNA + diphosphate. Catalyzes the transfer of a dimethylallyl group onto the adenine at position 37 in tRNAs that read codons beginning with uridine, leading to the formation of N6-(dimethylallyl)adenosine (i(6)A). The protein is tRNA dimethylallyltransferase of Chlorobium chlorochromatii (strain CaD3).